A 381-amino-acid chain; its full sequence is tRNA-cytidine(32) 2-sulfurtransferase (381 aa).

Residues 101–106 (SGGKDS) carry the PP-loop motif motif. [4Fe-4S] cluster is bound by residues Cys176, Cys179, and Cys267.

The protein belongs to the TtcA family. As to quaternary structure, homodimer. Requires Mg(2+) as cofactor. The cofactor is [4Fe-4S] cluster.

It is found in the cytoplasm. It carries out the reaction cytidine(32) in tRNA + S-sulfanyl-L-cysteinyl-[cysteine desulfurase] + AH2 + ATP = 2-thiocytidine(32) in tRNA + L-cysteinyl-[cysteine desulfurase] + A + AMP + diphosphate + H(+). The protein operates within tRNA modification. Functionally, catalyzes the ATP-dependent 2-thiolation of cytidine in position 32 of tRNA, to form 2-thiocytidine (s(2)C32). The sulfur atoms are provided by the cysteine/cysteine desulfurase (IscS) system. The polypeptide is tRNA-cytidine(32) 2-sulfurtransferase (Psychrobacter arcticus (strain DSM 17307 / VKM B-2377 / 273-4)).